A 31-amino-acid chain; its full sequence is Cytochrome b6-f complex subunit 6 (31 aa).

A helical transmembrane segment spans residues 5 to 25 (ISYLGILVGALLFVTITFLTL).

The protein belongs to the PetL family. The 4 large subunits of the cytochrome b6-f complex are cytochrome b6, subunit IV (17 kDa polypeptide, PetD), cytochrome f and the Rieske protein, while the 4 small subunits are PetG, PetL, PetM and PetN. The complex functions as a dimer.

Its subcellular location is the plastid. The protein resides in the chloroplast thylakoid membrane. Its function is as follows. Component of the cytochrome b6-f complex, which mediates electron transfer between photosystem II (PSII) and photosystem I (PSI), cyclic electron flow around PSI, and state transitions. PetL is important for photoautotrophic growth as well as for electron transfer efficiency and stability of the cytochrome b6-f complex. This is Cytochrome b6-f complex subunit 6 from Chlorokybus atmophyticus (Soil alga).